A 161-amino-acid chain; its full sequence is Cyclic pyranopterin monophosphate synthase (161 aa).

Substrate contacts are provided by residues 75–77 (LCH) and 113–114 (ME). Residue Asp-128 is part of the active site.

The protein belongs to the MoaC family. As to quaternary structure, homohexamer; trimer of dimers.

The catalysed reaction is (8S)-3',8-cyclo-7,8-dihydroguanosine 5'-triphosphate = cyclic pyranopterin phosphate + diphosphate. The protein operates within cofactor biosynthesis; molybdopterin biosynthesis. Functionally, catalyzes the conversion of (8S)-3',8-cyclo-7,8-dihydroguanosine 5'-triphosphate to cyclic pyranopterin monophosphate (cPMP). This chain is Cyclic pyranopterin monophosphate synthase, found in Escherichia coli O9:H4 (strain HS).